Consider the following 395-residue polypeptide: Zinc-regulated GTPase metalloprotein activator 1B (395 aa).

Residues 1 to 36 are disordered; the sequence is MLPAVGSADEEEDPAEEDCPELVPMETTQSEEEEKS. Residues 8-20 are compositionally biased toward acidic residues; it reads ADEEEDPAEEDCP. The short motif at 17 to 24 is the psi-PxLVp motif element; it reads EDCPELVP. 49–56 lines the GTP pocket; it reads GYLGAGKT. Positions 107, 109, and 110 each coordinate Zn(2+). Positions 107-110 match the CXCC motif motif; that stretch reads CLCC. GTP contacts are provided by residues 110–114 and 203–206; these read CSVKD and NKTD. The region spanning 274–377 is the CobW C-terminal domain; that stretch reads IVTITFEVPG…ILKQLFIATV (104 aa).

Belongs to the SIMIBI class G3E GTPase family. ZNG1 subfamily.

The protein localises to the nucleus. It carries out the reaction GTP + H2O = GDP + phosphate + H(+). In terms of biological role, zinc chaperone that directly transfers zinc cofactor to target metalloproteins, thereby activating them. Catalyzes zinc insertion into the active site of methionine aminopeptidase METAP1, which function to cleave the initiator methionine from polypeptides during or after protein translation. Mechanistically, the N-terminal psi-PxLVp motif binds to the C6H2-type zinc finger of inactive form of METAP1. After formation of the docked complex, zinc is transferred from the CXCC motif in the GTPase domain of ZNG1B to the zinc binding site in the peptidase domain of METAP1 in a process requiring GTP hydrolysis. GTP/GDP exchange is required for release of active METAP1. The protein is Zinc-regulated GTPase metalloprotein activator 1B of Homo sapiens (Human).